The sequence spans 608 residues: Glutamyl-tRNA(Gln) amidotransferase subunit E (608 aa).

A disordered region spans residues 402-422 (EETRGANPDGTTRFLRPRPGA).

The protein belongs to the GatB/GatE family. GatE subfamily. In terms of assembly, heterodimer of GatD and GatE.

It catalyses the reaction L-glutamyl-tRNA(Gln) + L-glutamine + ATP + H2O = L-glutaminyl-tRNA(Gln) + L-glutamate + ADP + phosphate + H(+). Functionally, allows the formation of correctly charged Gln-tRNA(Gln) through the transamidation of misacylated Glu-tRNA(Gln) in organisms which lack glutaminyl-tRNA synthetase. The reaction takes place in the presence of glutamine and ATP through an activated gamma-phospho-Glu-tRNA(Gln). The GatDE system is specific for glutamate and does not act on aspartate. In Pyrobaculum calidifontis (strain DSM 21063 / JCM 11548 / VA1), this protein is Glutamyl-tRNA(Gln) amidotransferase subunit E.